The sequence spans 286 residues: 4-hydroxybenzoate octaprenyltransferase (286 aa).

The next 7 helical transmembrane spans lie at 20-40 (IGTL…AGGM), 43-63 (LKVL…GCII), 96-116 (LFVV…PLVV), 142-162 (FLGV…TGTV), 167-187 (WWLF…YAMV), 210-230 (QVIA…GWAA), and 234-254 (LVYA…QKLI).

This sequence belongs to the UbiA prenyltransferase family. The cofactor is Mg(2+).

The protein localises to the cell inner membrane. It catalyses the reaction all-trans-octaprenyl diphosphate + 4-hydroxybenzoate = 4-hydroxy-3-(all-trans-octaprenyl)benzoate + diphosphate. It participates in cofactor biosynthesis; ubiquinone biosynthesis. Catalyzes the prenylation of para-hydroxybenzoate (PHB) with an all-trans polyprenyl group. Mediates the second step in the final reaction sequence of ubiquinone-8 (UQ-8) biosynthesis, which is the condensation of the polyisoprenoid side chain with PHB, generating the first membrane-bound Q intermediate 3-octaprenyl-4-hydroxybenzoate. In Shewanella woodyi (strain ATCC 51908 / MS32), this protein is 4-hydroxybenzoate octaprenyltransferase.